We begin with the raw amino-acid sequence, 280 residues long: Aquaporin PIP2-7 (280 aa).

At Met-1 the chain carries N-acetylmethionine. Topologically, residues 1–38 (MSKEVSEEGKTHHGKDYVDPPPAPLLDMGELKSWSFYR) are cytoplasmic. Lys-3 is subject to N6,N6-dimethyllysine. A helical membrane pass occupies residues 39–59 (ALIAEFIATLLFLYVTVATVI). Topologically, residues 60-69 (GHKKQTGPCD) are extracellular. A helical transmembrane segment spans residues 70–90 (GVGLLGIAWAFGGMIFVLVYC). The Cytoplasmic segment spans residues 91–118 (TAGISGGHINPAVTFGLFLARKVSLVRA). An NPA 1 motif is present at residues 100–102 (NPA). The chain crosses the membrane as a helical span at residues 119 to 139 (LGYMIAQCLGAICGVGFVKAF). At 140-160 (MKTPYNTLGGGANTVADGYSK) the chain is on the extracellular side. Residues 161 to 181 (GTALGAEIIGTFVLVYTVFSA) traverse the membrane as a helical segment. At 182–192 (TDPKRSARDSH) the chain is on the cytoplasmic side. Residues 193-213 (IPVLAPLPIGFAVFMVHLATI) traverse the membrane as a helical segment. At 214 to 242 (PITGTGINPARSFGAAVIYNNEKAWDDQW) the chain is on the extracellular side. The short motif at 221-223 (NPA) is the NPA 2 element. Residues 243-263 (IFWVGPFLGALAAAAYHQYIL) traverse the membrane as a helical segment. Residues 264–280 (RASAIKALGSFRSNATN) are Cytoplasmic-facing. Phosphoserine is present on residues Ser-273 and Ser-276. Thr-279 is modified (phosphothreonine).

It belongs to the MIP/aquaporin (TC 1.A.8) family. PIP (TC 1.A.8.11) subfamily. In terms of assembly, interacts with SYP61 and SYP121 in trafficking vesicles and at the plasma membrane. As to expression, highly expressed in flowers, expressed at low levels in siliques, and at low level in leaves and roots. Highly levels in elongating cells in both roots and shoots.

It is found in the cell membrane. In terms of biological role, water channel required to facilitate the transport of water across cell membrane. May be involved in the osmoregulation in plants under high osmotic stress such as under a high salt condition. The protein is Aquaporin PIP2-7 of Arabidopsis thaliana (Mouse-ear cress).